We begin with the raw amino-acid sequence, 423 residues long: Serine incorporator 5 (423 aa).

Residues 1–36 are Extracellular-facing; it reads MSAQCCAGQLACCCGSAGCSLCCDCCPRIRQSLSTR. The helical transmembrane segment at 37 to 57 threads the bilayer; the sequence is FMYALYFILVVVLCCIMMSTT. Topologically, residues 58 to 89 are cytoplasmic; it reads VAHKMKEHIPFFEDMCKGIKAGDTCEKLVGYS. Residues 90-110 form a helical membrane-spanning segment; that stretch reads AVYRVCFGMACFFFIFCLLTL. At 111 to 124 the chain is on the extracellular side; that stretch reads KINNSKSCRAHIHN. N-linked (GlcNAc...) asparagine glycosylation is present at Asn-113. Residues 125–145 traverse the membrane as a helical segment; sequence GFWFFKLLLLGAMCSGAFFIP. Over 146 to 156 the chain is Cytoplasmic; sequence DQDTFLNAWRY. Residues 157-177 traverse the membrane as a helical segment; that stretch reads VGAVGGFLFIGIQLLLLVEFA. The Extracellular segment spans residues 178–198; that stretch reads HKWNKNWTAGTASNKLWYASL. Residue Asn-183 is glycosylated (N-linked (GlcNAc...) asparagine). The helical transmembrane segment at 199–219 threads the bilayer; that stretch reads ALVTLIMYSIATGGLVLMAVF. The Cytoplasmic portion of the chain corresponds to 220–230; it reads YTQKDSCMENK. The helical transmembrane segment at 231–251 threads the bilayer; the sequence is ILLGVNGGLCLLISLVAISPW. The Extracellular segment spans residues 252–258; it reads VQNRQPH. A helical transmembrane segment spans residues 259–279; it reads SGLLQSGVISCYVTYLTFSAL. Residues 280-311 lie on the Cytoplasmic side of the membrane; it reads SSKPAEVVLDEHGKNVTICVPDFGQDLYRDEN. A helical transmembrane segment spans residues 312–332; the sequence is LVTILGTSLLIGCILYSCLTS. At 333 to 385 the chain is on the extracellular side; that stretch reads TTRSSSDALQGRYAAPELEIARCCFCFSPGGEDTEEQQPGKEGPRVIYDEKKG. Residues 386 to 406 form a helical membrane-spanning segment; the sequence is TVYIYSYFHFVFFLASLYVMM. Residues 407–423 are Cytoplasmic-facing; sequence TVTNWFNHVRSAFHLLP.

This sequence belongs to the TDE1 family. In terms of tissue distribution, highly expressed in placenta, skeletal muscle, spleen, thymus, testis and peripheral leukocyte and is expressed weakly in the heart, liver and fetal brain.

It is found in the cell membrane. The protein localises to the cytoplasm. It localises to the perinuclear region. The enzyme catalyses a 1,2-diacyl-sn-glycero-3-phospho-L-serine(in) = a 1,2-diacyl-sn-glycero-3-phospho-L-serine(out). The catalysed reaction is a 1,2-diacyl-sn-glycero-3-phosphocholine(in) = a 1,2-diacyl-sn-glycero-3-phosphocholine(out). It carries out the reaction a 1,2-diacyl-sn-glycero-3-phosphoethanolamine(in) = a 1,2-diacyl-sn-glycero-3-phosphoethanolamine(out). Functionally, restriction factor required to restrict infectivity of lentiviruses, such as HIV-1: acts by inhibiting an early step of viral infection. Impairs the penetration of the viral particle into the cytoplasm. Non-ATP-dependent, non-specific lipid transporter for phosphatidylserine, phosphatidylcholine, and phosphatidylethanolamine. Functions as a scramblase that flips lipids in both directions across the membrane. Phospholipid scrambling results in HIV-1 surface exposure of phosphatidylserine and loss of membrane asymmetry, which leads to changes in HIV-1 Env conformation and loss of infectivity. Enhances the incorporation of serine into phosphatidylserine and sphingolipids. May play a role in providing serine molecules for the formation of myelin glycosphingolipids in oligodendrocytes. This Homo sapiens (Human) protein is Serine incorporator 5.